The chain runs to 372 residues: Flagellar P-ring protein (372 aa).

An N-terminal signal peptide occupies residues 1–26 (MNLSSLSFRLLATLLGACVVVAPASA).

It belongs to the FlgI family. As to quaternary structure, the basal body constitutes a major portion of the flagellar organelle and consists of four rings (L,P,S, and M) mounted on a central rod.

It localises to the periplasm. The protein resides in the bacterial flagellum basal body. Assembles around the rod to form the L-ring and probably protects the motor/basal body from shearing forces during rotation. This is Flagellar P-ring protein from Xanthomonas oryzae pv. oryzae (strain MAFF 311018).